Reading from the N-terminus, the 326-residue chain is Methionyl-tRNA formyltransferase (326 aa).

110-113 serves as a coordination point for (6S)-5,6,7,8-tetrahydrofolate; sequence SLLP. A disordered region spans residues 307-326; it reads VGTRFSPPEAPQREPAPGEA.

The protein belongs to the Fmt family.

It carries out the reaction L-methionyl-tRNA(fMet) + (6R)-10-formyltetrahydrofolate = N-formyl-L-methionyl-tRNA(fMet) + (6S)-5,6,7,8-tetrahydrofolate + H(+). Its function is as follows. Attaches a formyl group to the free amino group of methionyl-tRNA(fMet). The formyl group appears to play a dual role in the initiator identity of N-formylmethionyl-tRNA by promoting its recognition by IF2 and preventing the misappropriation of this tRNA by the elongation apparatus. The chain is Methionyl-tRNA formyltransferase from Symbiobacterium thermophilum (strain DSM 24528 / JCM 14929 / IAM 14863 / T).